Here is a 194-residue protein sequence, read N- to C-terminus: Fe/S biogenesis protein NfuA (194 aa).

Residues Cys-152 and Cys-155 each coordinate [4Fe-4S] cluster.

This sequence belongs to the NfuA family. Homodimer. [4Fe-4S] cluster is required as a cofactor.

Involved in iron-sulfur cluster biogenesis. Binds a 4Fe-4S cluster, can transfer this cluster to apoproteins, and thereby intervenes in the maturation of Fe/S proteins. Could also act as a scaffold/chaperone for damaged Fe/S proteins. The polypeptide is Fe/S biogenesis protein NfuA (Ectopseudomonas mendocina (strain ymp) (Pseudomonas mendocina)).